Reading from the N-terminus, the 290-residue chain is Light-independent protochlorophyllide reductase iron-sulfur ATP-binding protein (290 aa).

ATP is bound by residues 34 to 39 and Lys-63; that span reads GIGKST. Ser-38 serves as a coordination point for Mg(2+). Cys-119 and Cys-153 together coordinate [4Fe-4S] cluster. ATP is bound by residues 204–205 and 228–230; these read NR and PDL.

Belongs to the NifH/BchL/ChlL family. Homodimer. Protochlorophyllide reductase is composed of three subunits; BchL, BchN and BchB. [4Fe-4S] cluster serves as cofactor.

The catalysed reaction is chlorophyllide a + oxidized 2[4Fe-4S]-[ferredoxin] + 2 ADP + 2 phosphate = protochlorophyllide a + reduced 2[4Fe-4S]-[ferredoxin] + 2 ATP + 2 H2O. The protein operates within porphyrin-containing compound metabolism; bacteriochlorophyll biosynthesis (light-independent). Functionally, component of the dark-operative protochlorophyllide reductase (DPOR) that uses Mg-ATP and reduced ferredoxin to reduce ring D of protochlorophyllide (Pchlide) to form chlorophyllide a (Chlide). This reaction is light-independent. The L component serves as a unique electron donor to the NB-component of the complex, and binds Mg-ATP. In Rhodospirillum rubrum, this protein is Light-independent protochlorophyllide reductase iron-sulfur ATP-binding protein.